A 314-amino-acid polypeptide reads, in one-letter code: GATA zinc finger domain-containing protein 19 (314 aa).

In Dictyostelium discoideum (Social amoeba), this protein is GATA zinc finger domain-containing protein 19 (gtaS).